A 91-amino-acid chain; its full sequence is Elongation factor 1-beta (91 aa).

Belongs to the EF-1-beta/EF-1-delta family.

In terms of biological role, promotes the exchange of GDP for GTP in EF-1-alpha/GDP, thus allowing the regeneration of EF-1-alpha/GTP that could then be used to form the ternary complex EF-1-alpha/GTP/AAtRNA. This is Elongation factor 1-beta from Thermococcus onnurineus (strain NA1).